The chain runs to 243 residues: MALLELSELNQLPKVERVMALAEINNRLDKLSAEDRVLWGLENLPGQAVLTSSFGIQAAVSLHLVTRQKPDIPVILTDTGYLFPETYRFIDQLTEKLDLNLQVFRAEQSPAWQEARYGKLWEQGVEGIERYNQINKVEPMNRALETLQGQTWFAGLRRDQSGSRAHLPVLAVKKGIFKLLPIIDWDNRQVYQYLQQHGLSYHPLWEQGYLSVGDTHTTRKWEPGMAEEETRFFGLKRECGLHE.

The active-site Nucleophile; cysteine thiosulfonate intermediate is the cysteine 239.

This sequence belongs to the PAPS reductase family. CysH subfamily.

It localises to the cytoplasm. It carries out the reaction [thioredoxin]-disulfide + sulfite + adenosine 3',5'-bisphosphate + 2 H(+) = [thioredoxin]-dithiol + 3'-phosphoadenylyl sulfate. It functions in the pathway sulfur metabolism; hydrogen sulfide biosynthesis; sulfite from sulfate: step 3/3. Catalyzes the formation of sulfite from phosphoadenosine 5'-phosphosulfate (PAPS) using thioredoxin as an electron donor. The sequence is that of Phosphoadenosine 5'-phosphosulfate reductase from Erwinia tasmaniensis (strain DSM 17950 / CFBP 7177 / CIP 109463 / NCPPB 4357 / Et1/99).